The primary structure comprises 219 residues: Probable GTP-binding protein EngB (219 aa).

The 184-residue stretch at 24–207 (VQPEIAFAGR…HALIESWVRP (184 aa)) folds into the EngB-type G domain. GTP-binding positions include 32 to 39 (GRSNAGKS), 59 to 63 (GRTQH), 81 to 84 (DLPG), 148 to 151 (TKCD), and 186 to 188 (FSA). Residues serine 39 and threonine 61 each coordinate Mg(2+).

It belongs to the TRAFAC class TrmE-Era-EngA-EngB-Septin-like GTPase superfamily. EngB GTPase family. Mg(2+) is required as a cofactor.

Its function is as follows. Necessary for normal cell division and for the maintenance of normal septation. The protein is Probable GTP-binding protein EngB of Burkholderia multivorans (strain ATCC 17616 / 249).